The sequence spans 874 residues: Alanine--tRNA ligase (874 aa).

Zn(2+) is bound by residues His-563, His-567, Cys-665, and His-669.

Belongs to the class-II aminoacyl-tRNA synthetase family. Zn(2+) is required as a cofactor.

It localises to the cytoplasm. The catalysed reaction is tRNA(Ala) + L-alanine + ATP = L-alanyl-tRNA(Ala) + AMP + diphosphate. Catalyzes the attachment of alanine to tRNA(Ala) in a two-step reaction: alanine is first activated by ATP to form Ala-AMP and then transferred to the acceptor end of tRNA(Ala). Also edits incorrectly charged Ser-tRNA(Ala) and Gly-tRNA(Ala) via its editing domain. The sequence is that of Alanine--tRNA ligase from Actinobacillus pleuropneumoniae serotype 7 (strain AP76).